Consider the following 210-residue polypeptide: Na(+)-translocating NADH-quinone reductase subunit D (210 aa).

The next 6 membrane-spanning stretches (helical) occupy residues 14 to 34 (PIVN…ALAV), 42 to 62 (LVMA…ISMI), 72 to 92 (IIVQ…LLQA), 103 to 123 (VFVG…AYAM), 131 to 151 (FMDG…VGFV), and 178 to 198 (NGLL…IWII).

Belongs to the NqrDE/RnfAE family. In terms of assembly, composed of six subunits; NqrA, NqrB, NqrC, NqrD, NqrE and NqrF.

The protein resides in the cell inner membrane. It catalyses the reaction a ubiquinone + n Na(+)(in) + NADH + H(+) = a ubiquinol + n Na(+)(out) + NAD(+). Functionally, NQR complex catalyzes the reduction of ubiquinone-1 to ubiquinol by two successive reactions, coupled with the transport of Na(+) ions from the cytoplasm to the periplasm. NqrA to NqrE are probably involved in the second step, the conversion of ubisemiquinone to ubiquinol. This Shewanella sp. (strain ANA-3) protein is Na(+)-translocating NADH-quinone reductase subunit D.